Reading from the N-terminus, the 138-residue chain is ATP synthase epsilon chain (138 aa).

It belongs to the ATPase epsilon chain family. As to quaternary structure, F-type ATPases have 2 components, CF(1) - the catalytic core - and CF(0) - the membrane proton channel. CF(1) has five subunits: alpha(3), beta(3), gamma(1), delta(1), epsilon(1). CF(0) has three main subunits: a, b and c.

The protein resides in the cell inner membrane. In terms of biological role, produces ATP from ADP in the presence of a proton gradient across the membrane. The protein is ATP synthase epsilon chain of Wigglesworthia glossinidia brevipalpis.